Reading from the N-terminus, the 131-residue chain is Outer membrane protein assembly factor BamE (131 aa).

Positions 1 to 16 (MRNLLLVAAVALSTAG) are cleaved as a signal peptide. Residue Cys-17 is the site of N-palmitoyl cysteine attachment. A lipid anchor (S-diacylglycerol cysteine) is attached at Cys-17. The disordered stretch occupies residues 112–131 (SAPKQFGRNLARDKKKQRGR).

It belongs to the BamE family. As to quaternary structure, part of the Bam complex.

The protein resides in the cell outer membrane. Functionally, part of the outer membrane protein assembly complex, which is involved in assembly and insertion of beta-barrel proteins into the outer membrane. The protein is Outer membrane protein assembly factor BamE of Xanthomonas campestris pv. campestris (strain ATCC 33913 / DSM 3586 / NCPPB 528 / LMG 568 / P 25).